The following is a 513-amino-acid chain: GMP synthase [glutamine-hydrolyzing] (513 aa).

Residues 8–198 (MILVLDFGSQ…VFGVCECVGE (191 aa)) enclose the Glutamine amidotransferase type-1 domain. The active-site Nucleophile is cysteine 85. Catalysis depends on residues histidine 172 and glutamate 174. The 190-residue stretch at 199–388 (WSMENFIEIE…LGIPDEIVWR (190 aa)) folds into the GMPS ATP-PPase domain. 226–232 (SGGVDSS) lines the ATP pocket.

Homodimer.

It catalyses the reaction XMP + L-glutamine + ATP + H2O = GMP + L-glutamate + AMP + diphosphate + 2 H(+). The protein operates within purine metabolism; GMP biosynthesis; GMP from XMP (L-Gln route): step 1/1. Functionally, catalyzes the synthesis of GMP from XMP. This chain is GMP synthase [glutamine-hydrolyzing], found in Bacillus licheniformis (strain ATCC 14580 / DSM 13 / JCM 2505 / CCUG 7422 / NBRC 12200 / NCIMB 9375 / NCTC 10341 / NRRL NRS-1264 / Gibson 46).